A 112-amino-acid chain; its full sequence is Histone H3-4 (112 aa).

Positions 1-31 are disordered; the sequence is QTGAKAPRKALANKAARKTAPADGGVKKPHR.

Belongs to the histone H3 family. In terms of assembly, the nucleosome is a histone octamer containing two molecules each of H2A, H2B, H3 and H4 assembled in one H3-H4 heterotetramer and two H2A-H2B heterodimers. The octamer wraps approximately 147 bp of DNA.

It is found in the nucleus. Its subcellular location is the chromosome. Functionally, core component of nucleosome. Nucleosomes wrap and compact DNA into chromatin, limiting DNA accessibility to the cellular machineries which require DNA as a template. Histones thereby play a central role in transcription regulation, DNA repair, DNA replication and chromosomal stability. DNA accessibility is regulated via a complex set of post-translational modifications of histones, also called histone code, and nucleosome remodeling. The chain is Histone H3-4 (H3-4) from Stylonychia lemnae (Ciliate).